Here is a 197-residue protein sequence, read N- to C-terminus: Wadjet protein JetB (197 aa).

Its function is as follows. Component of antiplasmid transformation system Wadjet type I, composed of JetA, JetB, JetC and JetD. Expression of Wadjet type I in B.subtilis (strain BEST7003) reduces the transformation efficiency of plasmid pHCMC05. The polypeptide is Wadjet protein JetB (Bacillus cereus (strain Q1)).